A 479-amino-acid polypeptide reads, in one-letter code: Galactosylgalactosylxylosylprotein 3-beta-glucuronosyltransferase P (479 aa).

Residues 1 to 34 lie on the Cytoplasmic side of the membrane; sequence MKGGNYTSLGTCSGINVSGNVAGTRKMSLGKSIK. The helical; Signal-anchor for type II membrane protein transmembrane segment at 35-50 threads the bilayer; sequence MYLTIFILTTCIYMAL. At 51 to 479 the chain is on the lumenal side; sequence YQYHISREPF…EHIDRLLVRP (429 aa). N90, N97, N98, and N271 each carry an N-linked (GlcNAc...) asparagine glycan. Low complexity predominate over residues 94–120; that stretch reads NTNNNSTTTSTTTTTAPTTPTTTTTTT. The segment at 94–122 is disordered; that stretch reads NTNNNSTTTSTTTTTAPTTPTTTTTTTVG. D335 provides a ligand contact to Mn(2+). The active-site Proton acceptor is E418. N460 carries N-linked (GlcNAc...) asparagine glycosylation.

The protein belongs to the glycosyltransferase 43 family. It depends on Mn(2+) as a cofactor.

Its subcellular location is the golgi apparatus membrane. The enzyme catalyses 3-O-(beta-D-galactosyl-(1-&gt;3)-beta-D-galactosyl-(1-&gt;4)-beta-D-xylosyl)-L-seryl-[protein] + UDP-alpha-D-glucuronate = 3-O-(beta-D-GlcA-(1-&gt;3)-beta-D-Gal-(1-&gt;3)-beta-D-Gal-(1-&gt;4)-beta-D-Xyl)-L-seryl-[protein] + UDP + H(+). Its pathway is protein modification; protein glycosylation. Its function is as follows. Involved in the biosynthesis of L2/HNK-1 carbohydrate epitope on both glycolipids and glycoproteins. Enzyme has a broad specificity. This is Galactosylgalactosylxylosylprotein 3-beta-glucuronosyltransferase P (GlcAT-P) from Drosophila melanogaster (Fruit fly).